Reading from the N-terminus, the 126-residue chain is Holo-[acyl-carrier-protein] synthase (126 aa).

Positions 8 and 59 each coordinate Mg(2+).

This sequence belongs to the P-Pant transferase superfamily. AcpS family. The cofactor is Mg(2+).

It localises to the cytoplasm. The enzyme catalyses apo-[ACP] + CoA = holo-[ACP] + adenosine 3',5'-bisphosphate + H(+). Transfers the 4'-phosphopantetheine moiety from coenzyme A to a Ser of acyl-carrier-protein. The polypeptide is Holo-[acyl-carrier-protein] synthase (Rickettsia akari (strain Hartford)).